A 445-amino-acid polypeptide reads, in one-letter code: Sensor protein kinase CarS (445 aa).

The N-terminal stretch at 1-24 is a signal peptide; that stretch reads MRSIQRRLSVGLFAVLLVVGLVLA. The chain crosses the membrane as a helical span at residues 150–170; that stretch reads FARVQWMGLGAGALALLLVLL. The 52-residue stretch at 177–228 folds into the HAMP domain; that stretch reads RRSLRPLEEVRLQIAQLQQGQRSQLDNQAPEELEPLVEQINHLLAHTEETLK. One can recognise a Histidine kinase domain in the interval 236–438; the sequence is NLGHALKTPL…RVSVELPLQK (203 aa). At His239 the chain carries Phosphohistidine; by autocatalysis.

Its subcellular location is the membrane. The catalysed reaction is ATP + protein L-histidine = ADP + protein N-phospho-L-histidine.. Member of the two-component regulatory system CarS/CarR that regulates the expression of multiple genes involved in calcium signaling and homeostasis including CarO and CarP. May function as a membrane-associated protein kinase that phosphorylates CarR in response to environmental signals leading to activation of specific gene promoters. This is Sensor protein kinase CarS (carS) from Pseudomonas aeruginosa (strain ATCC 15692 / DSM 22644 / CIP 104116 / JCM 14847 / LMG 12228 / 1C / PRS 101 / PAO1).